A 147-amino-acid polypeptide reads, in one-letter code: MEVILRNAVDKLGHPGDIVSVSPGYARNFLIPRGFAYEATQGNRKRIAFEKSRLEALENERIAAAQAIADKLAEVSVTFAARVGEEGKLFGSVTTADIAHQLEAQGFKIEKRQIELNEPIKTLGVYRVGVRLHADVHPEIKVWVIKQ.

This sequence belongs to the bacterial ribosomal protein bL9 family.

Functionally, binds to the 23S rRNA. The polypeptide is Large ribosomal subunit protein bL9 (Gemmatimonas aurantiaca (strain DSM 14586 / JCM 11422 / NBRC 100505 / T-27)).